The chain runs to 148 residues: Large ribosomal subunit protein bL9 (148 aa).

The protein belongs to the bacterial ribosomal protein bL9 family.

Its function is as follows. Binds to the 23S rRNA. This is Large ribosomal subunit protein bL9 from Heliobacterium modesticaldum (strain ATCC 51547 / Ice1).